A 107-amino-acid chain; its full sequence is MENAFKLLYKTIEERKESPLPESYTNYLFSKGEDKILKKIGEECAEVIIACKNNDKEEVVKEMVDVFYHCFVLLAEKNIALEDVMREVKERNGKLSRVGDRREIDTL.

Belongs to the PRA-PH family.

It is found in the cytoplasm. It carries out the reaction 1-(5-phospho-beta-D-ribosyl)-ATP + H2O = 1-(5-phospho-beta-D-ribosyl)-5'-AMP + diphosphate + H(+). It participates in amino-acid biosynthesis; L-histidine biosynthesis; L-histidine from 5-phospho-alpha-D-ribose 1-diphosphate: step 2/9. In Bacillus cereus (strain G9842), this protein is Phosphoribosyl-ATP pyrophosphatase.